Consider the following 963-residue polypeptide: MERREEQLGAAGAGAAPALDFTVENVEKALHQLYYDPNIENKNLAQKWLMQAQVSPQAWHFSWQLLQPDKVPEIQYFGASALHIKISRYWSDIPTDQYESLKAHSFTQITRFASGSKIVLTRLCVALASLALSMMPDAWPCAVADMVRLFQAEDSPVDSQGRCLALLELLTVLPEEFQTSRLPQYRKGLVRASLAVECGAVFPLLEQLLQQPSSPSCVRQKVLKCFSSWVQLEVPLQDCEALIQAAFAALQDSELFDSSVEAIVNAISQPDAQRYVNTLLKLIPLVLGLQEQLRQAVQNGDMETSHGICRIAVALGENHSRALLDQVEHWQSFLALVNMIMFCTGIPGHYPVNETTSSLTLTFWYTLQDDILSFEAEKQAVYQQVYRPVYFQLVDVLLHKAQFPSDEEYGFWSSDEKEQFRIYRVDISDTLMYVYEMLGAELLSNLYDKLGRLLTSSEEPYSWQHTEALLYGFQSIAETIDVNYSDVVPGLIGLIPRISISNVQLADTVMFTIGALSEWLADHPVMINSVLPLVLHALGNPELSVSSVSTLKKICRECKYELPPYAANIVAVSQDVLMKQIHKTSQCMWLMQALGFLLSALQVEENLKNLHSLISTYIQQLEKLAEEIPKPSNKLAIVHILGLLSNLFTTLDVSHHEDDHEGPELRKLPVPQGPNPVVVVLQQVFQLIQKVLSKWLSDAQVVEAVCAIFEKSVKTLLDDFAPMVPQLCEMLGRMYSTVPQASALDLTRQLVHIFAHEPAHFPPIEALFLLVTSVTLSLFQQGPRDHPDIVDSFMQLLAQALKRKPDLFQCERLDVKAVFQCAVLALKFPEAPTVKASCGFFTELLPRCGEIESVGKVVQEDGRMLLIAVLEAIGGQASRSLMDCFADILFALNKHCFSLLSMWIKEALQPPGFPSARLSPEQKDTFSQQILRERVNKRRVKEMVKEFTLLCRGLHGTDYTADY.

HEAT repeat units follow at residues 24–54, 56–88, 95–135, 142–179, 194–231, 236–268, 276–325, 330–372, 375–438, 440–476, 487–522, 524–558, 562–600, 603–648, 676–716, 720–754, 761–803, 815–845, 860–893, and 897–931; these read ENVE…QAQV, PQAW…KISR, TDQY…LSMM, AVAD…EFQT, LAVE…SWVQ, LQDC…NAIS, VNTL…ALLD, WQSF…DDIL, EAEK…YEML, AELL…FQSI, VVPG…WLAD, PVMI…CREC, LPPY…LLSA, VEEN…SNLF, PVVV…VKTL, FAPM…VHIF, FPPI…ALKR, VKAV…TELL, EDGR…FALN, and FSLL…QQIL. The region spanning 45 to 111 is the Importin N-terminal domain; the sequence is AQKWLMQAQV…KAHSFTQITR (67 aa).

Belongs to the importin beta family. In terms of assembly, interacts with UBC9, RAN, RBM8A, eIF-1A and PAX6. As to expression, expressed in fetal brain, heart, intestine and kidney.

Its subcellular location is the cytoplasm. The protein localises to the nucleus. Functions in nuclear protein import as nuclear transport receptor. Serves as receptor for nuclear localization signals (NLS) in cargo substrates. Is thought to mediate docking of the importin/substrate complex to the nuclear pore complex (NPC) through binding to nucleoporin and the complex is subsequently translocated through the pore by an energy requiring, Ran-dependent mechanism. At the nucleoplasmic side of the NPC, Ran binds to the importin, the importin/substrate complex dissociates and importin is re-exported from the nucleus to the cytoplasm where GTP hydrolysis releases Ran. The directionality of nuclear import is thought to be conferred by an asymmetric distribution of the GTP- and GDP-bound forms of Ran between the cytoplasm and nucleus. Mediates the nuclear import of UBC9, the RBM8A/MAGOH complex, PAX6 and probably other members of the paired homeobox family. Also mediates nuclear export of eIF-1A, and the cytoplasmic release of eIF-1A is triggered by the loading of import substrates onto IPO13. In Rattus norvegicus (Rat), this protein is Importin-13 (Ipo13).